A 132-amino-acid chain; its full sequence is Small ribosomal subunit protein uS11 (132 aa).

The protein belongs to the universal ribosomal protein uS11 family. As to quaternary structure, part of the 30S ribosomal subunit. Interacts with proteins S7 and S18. Binds to IF-3.

Its function is as follows. Located on the platform of the 30S subunit, it bridges several disparate RNA helices of the 16S rRNA. Forms part of the Shine-Dalgarno cleft in the 70S ribosome. This Alcanivorax borkumensis (strain ATCC 700651 / DSM 11573 / NCIMB 13689 / SK2) protein is Small ribosomal subunit protein uS11.